A 396-amino-acid polypeptide reads, in one-letter code: Lipid-A-disaccharide synthase (396 aa).

The protein belongs to the LpxB family.

The catalysed reaction is a lipid X + a UDP-2-N,3-O-bis[(3R)-3-hydroxyacyl]-alpha-D-glucosamine = a lipid A disaccharide + UDP + H(+). It participates in bacterial outer membrane biogenesis; LPS lipid A biosynthesis. Its function is as follows. Condensation of UDP-2,3-diacylglucosamine and 2,3-diacylglucosamine-1-phosphate to form lipid A disaccharide, a precursor of lipid A, a phosphorylated glycolipid that anchors the lipopolysaccharide to the outer membrane of the cell. The polypeptide is Lipid-A-disaccharide synthase (Rhodopseudomonas palustris (strain BisB18)).